A 1520-amino-acid polypeptide reads, in one-letter code: DNA topoisomerase 2 top-2 (1520 aa).

A compositionally biased stretch (acidic residues) spans 1-10 (MSDSDSEFSI). Positions 1–40 (MSDSDSEFSIEDSPKKKTAPKKEKASPKKKKDDANESMVM) are disordered. Basic and acidic residues predominate over residues 12–34 (DSPKKKTAPKKEKASPKKKKDDA). ATP is bound by residues asparagine 126, asparagine 155, 183-185 (SSN), 196-203 (GRNGYGAK), and 411-413 (QTK). The Toprim domain occupies 490–607 (CTLILTEGDS…SLIQRNFVEE (118 aa)). Residues glutamate 496, aspartate 576, and aspartate 578 each contribute to the Mg(2+) site. The 470-residue stretch at 750 to 1219 (IPCLVDGFKP…TWQDLWHEDL (470 aa)) folds into the Topo IIA-type catalytic domain. Tyrosine 840 (O-(5'-phospho-DNA)-tyrosine intermediate) is an active-site residue. Positions 1249 to 1520 (AADAKTGRGP…RGRVVDSDSD (272 aa)) are disordered. Basic and acidic residues predominate over residues 1283–1320 (TKAKYEKMSQPKKERVKKEPKEPKEPKKVKKEGQDIKK). Residues 1342 to 1364 (MSEESDVEFDEGIDFDSDDDGVE) are compositionally biased toward acidic residues.

It belongs to the type II topoisomerase family. Homodimer. Interacts with nmad-1; the interaction is required for localization of top-2 to DNA. Interacts with gcna-1; this interaction allows the resolution of topoisomerase 2 DNA-protein cross-links. It depends on Mg(2+) as a cofactor. Mn(2+) serves as cofactor. Requires Ca(2+) as cofactor. Expressed in the hermaphrodite and male germline.

It is found in the nucleus. The protein localises to the nucleoplasm. The protein resides in the chromosome. Its subcellular location is the cytoplasm. It localises to the cytoskeleton. It is found in the spindle. It catalyses the reaction ATP-dependent breakage, passage and rejoining of double-stranded DNA.. Its function is as follows. Control of topological states of DNA by transient breakage and subsequent rejoining of DNA strands. Topoisomerase II makes double-strand breaks. Essential during mitosis in the adult germline and during embryogenesis for proper segregation of daughter chromosomes. Required for centromere resolution during mitosis. Required for chromosome segregation in anaphase of meiosis I during spermatogenesis. Promotes cleavage furrow stability during cytokinesis upon the presence of chromatin obstructions. Promotes DNA break formation upon zygotic genome activation in the Z2 and Z3 primordial germ cells in L1 larvae, thereby activating a checkpoint response. Essential for embryogenesis. This is DNA topoisomerase 2 top-2 from Caenorhabditis elegans.